The chain runs to 217 residues: Phosphoribosylformylglycinamidine synthase subunit PurQ (217 aa).

In terms of domain architecture, Glutamine amidotransferase type-1 spans Asn-2–Ser-217. Cys-86 serves as the catalytic Nucleophile. Residues His-194 and Glu-196 contribute to the active site.

In terms of assembly, part of the FGAM synthase complex composed of 1 PurL, 1 PurQ and 2 PurS subunits.

The protein resides in the cytoplasm. It carries out the reaction N(2)-formyl-N(1)-(5-phospho-beta-D-ribosyl)glycinamide + L-glutamine + ATP + H2O = 2-formamido-N(1)-(5-O-phospho-beta-D-ribosyl)acetamidine + L-glutamate + ADP + phosphate + H(+). The enzyme catalyses L-glutamine + H2O = L-glutamate + NH4(+). It functions in the pathway purine metabolism; IMP biosynthesis via de novo pathway; 5-amino-1-(5-phospho-D-ribosyl)imidazole from N(2)-formyl-N(1)-(5-phospho-D-ribosyl)glycinamide: step 1/2. Part of the phosphoribosylformylglycinamidine synthase complex involved in the purines biosynthetic pathway. Catalyzes the ATP-dependent conversion of formylglycinamide ribonucleotide (FGAR) and glutamine to yield formylglycinamidine ribonucleotide (FGAM) and glutamate. The FGAM synthase complex is composed of three subunits. PurQ produces an ammonia molecule by converting glutamine to glutamate. PurL transfers the ammonia molecule to FGAR to form FGAM in an ATP-dependent manner. PurS interacts with PurQ and PurL and is thought to assist in the transfer of the ammonia molecule from PurQ to PurL. In Prochlorococcus marinus (strain NATL2A), this protein is Phosphoribosylformylglycinamidine synthase subunit PurQ.